The following is a 382-amino-acid chain: Galactokinase (382 aa).

34 to 37 provides a ligand contact to substrate; sequence EHTD. 124-130 lines the ATP pocket; the sequence is GAGLSSS. Mg(2+)-binding residues include Ser-130 and Glu-162. Asp-174 acts as the Proton acceptor in catalysis. Residue Tyr-223 participates in substrate binding.

The protein belongs to the GHMP kinase family. GalK subfamily.

The protein localises to the cytoplasm. The enzyme catalyses alpha-D-galactose + ATP = alpha-D-galactose 1-phosphate + ADP + H(+). It participates in carbohydrate metabolism; galactose metabolism. Functionally, catalyzes the transfer of the gamma-phosphate of ATP to D-galactose to form alpha-D-galactose-1-phosphate (Gal-1-P). The sequence is that of Galactokinase from Erwinia tasmaniensis (strain DSM 17950 / CFBP 7177 / CIP 109463 / NCPPB 4357 / Et1/99).